The sequence spans 316 residues: tRNA-splicing endonuclease subunit Sen34 (316 aa).

Residues 120–184 (QAAKKQKLEQ…PGPSNGVTPL (65 aa)) are disordered. Polar residues-rich tracts occupy residues 144 to 159 (EATQGSETSDDGQPSA) and 168 to 181 (LDSSSPQPGPSNGV). Catalysis depends on residues Tyr-253, His-261, and Lys-292.

It belongs to the tRNA-intron endonuclease family. As to quaternary structure, tRNA splicing endonuclease is a heterotetramer composed of TSEN2, TSEN15, TSEN34/LENG5 and TSEN54. tRNA splicing endonuclease complex also contains proteins of the pre-mRNA 3'-end processing machinery such as CLP1, CPSF1, CPSF4 and CSTF2.

Its subcellular location is the nucleus. The protein localises to the nucleolus. The enzyme catalyses pretRNA = a 3'-half-tRNA molecule with a 5'-OH end + a 5'-half-tRNA molecule with a 2',3'-cyclic phosphate end + an intron with a 2',3'-cyclic phosphate and a 5'-hydroxyl terminus.. Its function is as follows. Constitutes one of the two catalytic subunit of the tRNA-splicing endonuclease complex, a complex responsible for identification and cleavage of the splice sites in pre-tRNA. It cleaves pre-tRNA at the 5'- and 3'-splice sites to release the intron. The products are an intron and two tRNA half-molecules bearing 2',3'-cyclic phosphate and 5'-OH termini. There are no conserved sequences at the splice sites, but the intron is invariably located at the same site in the gene, placing the splice sites an invariant distance from the constant structural features of the tRNA body. The tRNA splicing endonuclease is also involved in mRNA processing via its association with pre-mRNA 3'-end processing factors, establishing a link between pre-tRNA splicing and pre-mRNA 3'-end formation, suggesting that the endonuclease subunits function in multiple RNA-processing events. The sequence is that of tRNA-splicing endonuclease subunit Sen34 (Tsen34) from Mus musculus (Mouse).